A 163-amino-acid polypeptide reads, in one-letter code: SsrA-binding protein (163 aa).

Belongs to the SmpB family.

It localises to the cytoplasm. Functionally, required for rescue of stalled ribosomes mediated by trans-translation. Binds to transfer-messenger RNA (tmRNA), required for stable association of tmRNA with ribosomes. tmRNA and SmpB together mimic tRNA shape, replacing the anticodon stem-loop with SmpB. tmRNA is encoded by the ssrA gene; the 2 termini fold to resemble tRNA(Ala) and it encodes a 'tag peptide', a short internal open reading frame. During trans-translation Ala-aminoacylated tmRNA acts like a tRNA, entering the A-site of stalled ribosomes, displacing the stalled mRNA. The ribosome then switches to translate the ORF on the tmRNA; the nascent peptide is terminated with the 'tag peptide' encoded by the tmRNA and targeted for degradation. The ribosome is freed to recommence translation, which seems to be the essential function of trans-translation. In Shewanella putrefaciens (strain CN-32 / ATCC BAA-453), this protein is SsrA-binding protein.